A 450-amino-acid polypeptide reads, in one-letter code: Tubulin beta-3 chain (450 aa).

Residues Q11, E69, S138, G142, T143, G144, N204, and N226 each coordinate GTP. E69 provides a ligand contact to Mg(2+). The segment at 420–450 (SEYQQYQDATADEEGDYEDEEEGEYQQEEEY) is disordered. The segment covering 429–450 (TADEEGDYEDEEEGEYQQEEEY) has biased composition (acidic residues).

This sequence belongs to the tubulin family. In terms of assembly, dimer of alpha and beta chains. A typical microtubule is a hollow water-filled tube with an outer diameter of 25 nm and an inner diameter of 15 nM. Alpha-beta heterodimers associate head-to-tail to form protofilaments running lengthwise along the microtubule wall with the beta-tubulin subunit facing the microtubule plus end conferring a structural polarity. Microtubules usually have 13 protofilaments but different protofilament numbers can be found in some organisms and specialized cells. Mg(2+) serves as cofactor.

It is found in the cytoplasm. Its subcellular location is the cytoskeleton. Tubulin is the major constituent of microtubules, a cylinder consisting of laterally associated linear protofilaments composed of alpha- and beta-tubulin heterodimers. Microtubules grow by the addition of GTP-tubulin dimers to the microtubule end, where a stabilizing cap forms. Below the cap, tubulin dimers are in GDP-bound state, owing to GTPase activity of alpha-tubulin. The chain is Tubulin beta-3 chain (TUBB3) from Arabidopsis thaliana (Mouse-ear cress).